A 96-amino-acid polypeptide reads, in one-letter code: (4S)-4-hydroxy-5-phosphonooxypentane-2,3-dione isomerase (96 aa).

The ABM domain maps to 2-91 (HVTLVEINVH…MTGPRTKKVF (90 aa)).

Belongs to the LsrG family. In terms of assembly, homodimer.

It is found in the cytoplasm. It catalyses the reaction (2S)-2-hydroxy-3,4-dioxopentyl phosphate = 3-hydroxy-2,4-dioxopentyl phosphate. Involved in the degradation of phospho-AI-2, thereby terminating induction of the lsr operon and closing the AI-2 signaling cycle. Catalyzes the conversion of (4S)-4-hydroxy-5-phosphonooxypentane-2,3-dione (P-DPD) to 3-hydroxy-5-phosphonooxypentane-2,4-dione (P-HPD). The protein is (4S)-4-hydroxy-5-phosphonooxypentane-2,3-dione isomerase of Salmonella typhimurium (strain LT2 / SGSC1412 / ATCC 700720).